The sequence spans 182 residues: 7-carboxy-7-deazaguanine synthase (182 aa).

Substrate contacts are provided by residues 12-14 and R27; that span reads LQG. The region spanning 18–182 is the Radical SAM core domain; that stretch reads HTGTPAVFIR…LQTHKLIDIR (165 aa). 3 residues coordinate [4Fe-4S] cluster: C31, C35, and C38. T40 lines the Mg(2+) pocket. Substrate is bound at residue T68. S-adenosyl-L-methionine is bound by residues G70 and 111–113; that span reads SPK.

Belongs to the radical SAM superfamily. 7-carboxy-7-deazaguanine synthase family. Homodimer. [4Fe-4S] cluster serves as cofactor. S-adenosyl-L-methionine is required as a cofactor. The cofactor is Mg(2+).

The catalysed reaction is 6-carboxy-5,6,7,8-tetrahydropterin + H(+) = 7-carboxy-7-deazaguanine + NH4(+). It participates in purine metabolism; 7-cyano-7-deazaguanine biosynthesis. Its function is as follows. Catalyzes the complex heterocyclic radical-mediated conversion of 6-carboxy-5,6,7,8-tetrahydropterin (CPH4) to 7-carboxy-7-deazaguanine (CDG), a step common to the biosynthetic pathways of all 7-deazapurine-containing compounds. The chain is 7-carboxy-7-deazaguanine synthase from Bacteroides thetaiotaomicron (strain ATCC 29148 / DSM 2079 / JCM 5827 / CCUG 10774 / NCTC 10582 / VPI-5482 / E50).